The chain runs to 344 residues: Putative F-box/kelch-repeat protein At1g19930 (344 aa).

The F-box domain maps to 8-54 (TELIFSLPNDLLVNILARVSRLDYPILSLVSKRFSSVLTLPELYQTR). Kelch repeat units lie at residues 122-168 (NIYN…LLDG), 170-195 (IYVT…VDGK), 196-241 (LHSC…YYYY), and 243-276 (NENI…NVRL).

In Arabidopsis thaliana (Mouse-ear cress), this protein is Putative F-box/kelch-repeat protein At1g19930.